Reading from the N-terminus, the 179-residue chain is Large ribosomal subunit protein uL5 (179 aa).

This sequence belongs to the universal ribosomal protein uL5 family. Part of the 50S ribosomal subunit; part of the 5S rRNA/L5/L18/L25 subcomplex. Contacts the 5S rRNA and the P site tRNA. Forms a bridge to the 30S subunit in the 70S ribosome.

Functionally, this is one of the proteins that bind and probably mediate the attachment of the 5S RNA into the large ribosomal subunit, where it forms part of the central protuberance. In the 70S ribosome it contacts protein S13 of the 30S subunit (bridge B1b), connecting the 2 subunits; this bridge is implicated in subunit movement. Contacts the P site tRNA; the 5S rRNA and some of its associated proteins might help stabilize positioning of ribosome-bound tRNAs. The sequence is that of Large ribosomal subunit protein uL5 from Dehalococcoides mccartyi (strain ATCC BAA-2100 / JCM 16839 / KCTC 5957 / BAV1).